The chain runs to 105 residues: NADH-quinone oxidoreductase subunit K (105 aa).

3 helical membrane passes run 4–24, 28–48, and 66–86; these read LTHYLILSGVLFAIGLMGVIV, IIVIFMCLEMMLSAANLSLVA, and LSIFILTIAAAEVAIGLALIV.

This sequence belongs to the complex I subunit 4L family. NDH-1 is composed of 14 different subunits. Subunits NuoA, H, J, K, L, M, N constitute the membrane sector of the complex.

The protein resides in the cell inner membrane. It catalyses the reaction a quinone + NADH + 5 H(+)(in) = a quinol + NAD(+) + 4 H(+)(out). In terms of biological role, NDH-1 shuttles electrons from NADH, via FMN and iron-sulfur (Fe-S) centers, to quinones in the respiratory chain. The immediate electron acceptor for the enzyme in this species is believed to be ubiquinone. Couples the redox reaction to proton translocation (for every two electrons transferred, four hydrogen ions are translocated across the cytoplasmic membrane), and thus conserves the redox energy in a proton gradient. The protein is NADH-quinone oxidoreductase subunit K of Akkermansia muciniphila (strain ATCC BAA-835 / DSM 22959 / JCM 33894 / BCRC 81048 / CCUG 64013 / CIP 107961 / Muc).